Consider the following 121-residue polypeptide: MNVEIGNRSLDNENSPIPKEKLTTLIDEVYGERKEKSDFTYNNLIQGILEGLNKHSSFYKYIVTVTDVQNKQSGSNDFELEHYFGASWSSKKDGLFQYCLPSEEDTSSQSVVTIVWISKSI.

This sequence belongs to the TDA2 family.

Its subcellular location is the cytoplasm. The protein resides in the cell projection. The sequence is that of Topoisomerase I damage affected protein 2 (TDA2) from Vanderwaltozyma polyspora (strain ATCC 22028 / DSM 70294 / BCRC 21397 / CBS 2163 / NBRC 10782 / NRRL Y-8283 / UCD 57-17) (Kluyveromyces polysporus).